A 169-amino-acid polypeptide reads, in one-letter code: 4-hydroxylaminobenzoate lyase (169 aa).

Belongs to the PnbB family.

It carries out the reaction 4-hydroxylaminobenzoate + H2O + H(+) = 3,4-dihydroxybenzoate + NH4(+). Its function is as follows. Lyase involved in the degradation of nitroaromatic compounds. Catalyzes the conversion of 4-hydroxylaminobenzoate to 3,4-dihydroxybenzoate (protocatechuate). The polypeptide is 4-hydroxylaminobenzoate lyase (Nocardioides sp. (strain LMS-CY)).